Here is a 185-residue protein sequence, read N- to C-terminus: Ribosome maturation factor RimM (185 aa).

The PRC barrel domain maps to 103–177 (SEEYYWYEIL…SIIVKKIEWY (75 aa)).

This sequence belongs to the RimM family. In terms of assembly, binds ribosomal protein uS19.

The protein resides in the cytoplasm. In terms of biological role, an accessory protein needed during the final step in the assembly of 30S ribosomal subunit, possibly for assembly of the head region. Essential for efficient processing of 16S rRNA. May be needed both before and after RbfA during the maturation of 16S rRNA. It has affinity for free ribosomal 30S subunits but not for 70S ribosomes. This Petrotoga mobilis (strain DSM 10674 / SJ95) protein is Ribosome maturation factor RimM.